The chain runs to 508 residues: MQTLPDLIPFDPNALLLGYQKRWVADTSQLKIAEKSRRTGLTWAEAADDVMIASLAKSEGGSDVFYIGSNKEMAREFIDACAMWAAQFNRAAGQIQEELFNDEDKDILTYVIYFASGFKIKALSSNPKNLRGMQGVVCIDEAAFHEKLAEVLKAALALTMWGAKVRLISTHNGVDNLFNQLIQDSRAGRKSYSVHTITLDDACAEGLYQRICQVSKQLWTPEKEAAWKAGLLRETATEDDALEEYYCVPKASSGAYIPRPMIERAATEGKAKLRFECDAKFMEWTEDERTVITSEFCLTQLLPHLQALNPDRRHAFGVDFARSADLSVYAVCAVQPDTARHFDLTLEIKNCPYNQQKQIMLFMLANLPRLIGAAFDATGNGGYLAEAALIRYGSSMVEAVQLNEKWYREWMPKYKALYESGYIQIPKDEEIILDHGHIQVINGVPKIDKSRSKDKSGKRHGDSAVAYCMAVRASYMTGGEIDFIPLPDKHSDRSENDEFDDFISNWDW.

The protein to phage Mu protein gp28.

This is Mu-like prophage FluMu protein gp28 from Haemophilus influenzae (strain ATCC 51907 / DSM 11121 / KW20 / Rd).